A 196-amino-acid chain; its full sequence is HTH-type transcriptional regulator EcpR (196 aa).

The HTH luxR-type domain occupies K138 to Q196. Residues P162–R181 constitute a DNA-binding region (H-T-H motif).

Belongs to the EcpR/MatA family.

The protein resides in the cytoplasm. Functionally, part of the ecpRABCDE operon, which encodes the E.coli common pilus (ECP). ECP is found in both commensal and pathogenic strains and plays a dual role in early-stage biofilm development and host cell recognition. Positively regulates the expression of the ecp operon. The chain is HTH-type transcriptional regulator EcpR (ecpR) from Escherichia coli O139:H28 (strain E24377A / ETEC).